The primary structure comprises 661 residues: MDAASGAPLLTQPERLERRLKEIPAEPGCYLMRDCDDRILYVGKSKALRSRVRSYFRSRHDLSPRIRLMTRQVCEIEFIVTDSEAEALVLESNLIKNHQPHFNVLLKDDKKYPYLCITWSEAYPRIFITRRRRFRSPLDRFYGPYVDVGLLRRTLFLVKRVFPLRQRPRPMYPDRTCLNYSIGRCPGVCQEKISSVDYHRTLRKVAMVFQGRSDELQHLLQEQMERYAERMDYESAARVRDQLQGLDQLTADQKMSLPDSSVSRDVLALAFDERLAAVQLFQMRAGKLVGRLGYTADASGLEPGLILQRVIEEHYSQVDSVEVPPELLVQHALPQQKLMEDWLTEQRERRVQIHCPQRQQKADLIELVQRNAEFELLRAKQGQEKQSLATEDLAQLLELPTPPRRIEGYDISHIQGSDAVASQVVFIDGLPAKQHYRKYKIRSSSIRAGHSDDFMAMAEIMRRRFRRWARAKAEGMDVGALRHKGGSALQTDGLNDWPDVVMIDGGKGQLSAVMEALRELDLHEDLNVCSLAKQREEVFLPGESQPLESEPDQLGVVLLRRLRDEAHRFAVSFHRQQRGERMKRSRLSDIPGVGPKRVKDLLAHFHSIDAIQLASIETLSKAPGVGPALARDIHDFFHPSDEGTDADARAALEEQPQELSA.

Residues Ala25–Val104 enclose the GIY-YIG domain. Residues Asp214–Leu249 form the UVR domain. The span at Phe636–Leu652 shows a compositional bias: basic and acidic residues. The interval Phe636–Ala661 is disordered.

Belongs to the UvrC family. In terms of assembly, interacts with UvrB in an incision complex.

It is found in the cytoplasm. The UvrABC repair system catalyzes the recognition and processing of DNA lesions. UvrC both incises the 5' and 3' sides of the lesion. The N-terminal half is responsible for the 3' incision and the C-terminal half is responsible for the 5' incision. This is UvrABC system protein C from Synechococcus sp. (strain CC9605).